Reading from the N-terminus, the 506-residue chain is Cytochrome P450 4B1 (506 aa).

Residue E310 participates in heme binding. Residue S431 is modified to Phosphoserine. C448 contributes to the heme binding site.

The protein belongs to the cytochrome P450 family. Heme serves as cofactor.

The protein localises to the endoplasmic reticulum membrane. Its subcellular location is the microsome membrane. It catalyses the reaction an organic molecule + reduced [NADPH--hemoprotein reductase] + O2 = an alcohol + oxidized [NADPH--hemoprotein reductase] + H2O + H(+). Cytochromes P450 are a group of heme-thiolate monooxygenases. In liver microsomes, this enzyme is involved in an NADPH-dependent electron transport pathway. It oxidizes a variety of structurally unrelated compounds, including steroids, fatty acids, and xenobiotics. The protein is Cytochrome P450 4B1 (CYP4B1) of Oryctolagus cuniculus (Rabbit).